Here is a 94-residue protein sequence, read N- to C-terminus: Integration host factor subunit beta (94 aa).

It belongs to the bacterial histone-like protein family. As to quaternary structure, heterodimer of an alpha and a beta chain.

Functionally, this protein is one of the two subunits of integration host factor, a specific DNA-binding protein that functions in genetic recombination as well as in transcriptional and translational control. This is Integration host factor subunit beta from Histophilus somni (strain 129Pt) (Haemophilus somnus).